A 389-amino-acid polypeptide reads, in one-letter code: MEKAIRNFLSQESAGGILLLVAVALAMLMANSPLSGLYQGFLGTDVQVKIGELDIHKPLILWINDGLMAVFFLLIGLEVKRELLEGALSSVAQASLPTFAAIGGMLVPAGVYLLFNYGDPVTQAGWAIPAATDIAFALGIMALLGSRVPVSLKVFLLALAIIDDLGVIVIIALFYSTDLSTISLVIASLAIAGLVGLNRKGVTSLLPYGILGLILWVAVLKSGVHATLAGVIIAFCIPLRAKDGSSPSEGLEHSLHPWSTFFILPVFAFANAGVYVGNMNLETLISPVPVGIALGLMLGKPIGVMVFSYIAVKLKLAQLPDGVGWKQIAPVAAMCGIGFTMSMFIASLAFEHADPMYGDLARLGTLIGSIMAALVGYFWLSKVLPNKGV.

11 consecutive transmembrane segments (helical) span residues 14 to 34 (AGGILLLVAVALAMLMANSPL), 59 to 79 (LILWINDGLMAVFFLLIGLEV), 95 to 115 (SLPTFAAIGGMLVPAGVYLLF), 124 to 144 (AGWAIPAATDIAFALGIMALL), 154 to 174 (VFLLALAIIDDLGVIVIIALF), 177 to 197 (TDLSTISLVIASLAIAGLVGL), 213 to 233 (LILWVAVLKSGVHATLAGVII), 257 to 277 (PWSTFFILPVFAFANAGVYVG), 292 to 312 (IALGLMLGKPIGVMVFSYIAV), 328 to 348 (IAPVAAMCGIGFTMSMFIASL), and 363 to 383 (LGTLIGSIMAALVGYFWLSKV).

It belongs to the NhaA Na(+)/H(+) (TC 2.A.33) antiporter family.

The protein resides in the cell inner membrane. The catalysed reaction is Na(+)(in) + 2 H(+)(out) = Na(+)(out) + 2 H(+)(in). In terms of biological role, na(+)/H(+) antiporter that extrudes sodium in exchange for external protons. This chain is Na(+)/H(+) antiporter NhaA, found in Shewanella baltica (strain OS223).